The chain runs to 676 residues: Pentatricopeptide repeat-containing protein ATP4 homolog, chloroplastic (676 aa).

The transit peptide at 1-73 directs the protein to the chloroplast; the sequence is MASPSSLLSW…NSPRAAGLAR (73 aa). The disordered stretch occupies residues 17–58; that stretch reads LSFQPKNPSPSPATARVSVQDPPPPPSDANPSPGRSSNTSRY. PPR repeat units lie at residues 148-182, 183-217, 218-252, 253-287, 288-322, 323-353, 358-388, 396-430, 431-465, and 532-566; these read EVILYNVALKALRKRRRWSDAEALWEEMLREGVQP, DNATFSTVISCARACGMPGKAVEWFEKMPDFGCSP, DMLTYSAVIDAYGRAGDAETALRLYDRARAEKWQL, DPVICATVIRVHSSSGNFDGALNVFEEMKAAGVKP, NLVVYNTVLDAMGRAMRPWVVKTIHRELVSQEAVP, NKATYCCLLHAYTRARYGEDAMAVYRVMKDE, DVVLYNMLLSMCADIGYVEEAEEIFRDMKAS, DSWSYSSMVTLYSCTGNVAGAEGILNEMVEAGFKP, NIFILTSLIRCYGKAGRTDDVVRSFAMLEDLGITP, and RMPYCNCLMDLAVNLSQMEKACALLDVALRLGIYS. Residues 578–662 enclose the Smr domain; that stretch reads LHLRGLSVGA…WFLTTSVAAR (85 aa).

Belongs to the PPR family. P subfamily.

It is found in the plastid. Its subcellular location is the chloroplast. Involved in translation and accumulation of chloroplast ATP synthase subunits. This chain is Pentatricopeptide repeat-containing protein ATP4 homolog, chloroplastic, found in Oryza sativa subsp. japonica (Rice).